Consider the following 237-residue polypeptide: Demethylmenaquinone methyltransferase (237 aa).

S-adenosyl-L-methionine is bound by residues threonine 58, aspartate 79, and 106–107; that span reads NA.

The protein belongs to the class I-like SAM-binding methyltransferase superfamily. MenG/UbiE family.

It catalyses the reaction a 2-demethylmenaquinol + S-adenosyl-L-methionine = a menaquinol + S-adenosyl-L-homocysteine + H(+). The protein operates within quinol/quinone metabolism; menaquinone biosynthesis; menaquinol from 1,4-dihydroxy-2-naphthoate: step 2/2. Functionally, methyltransferase required for the conversion of demethylmenaquinol (DMKH2) to menaquinol (MKH2). The polypeptide is Demethylmenaquinone methyltransferase (Bacillus anthracis (strain A0248)).